We begin with the raw amino-acid sequence, 394 residues long: Elongation factor Tu (394 aa).

The 195-residue stretch at 10 to 204 (KPHVNVGTIG…ALDTYIPEPE (195 aa)) folds into the tr-type G domain. The segment at 19–26 (GHVDHGKT) is G1. 19-26 (GHVDHGKT) contacts GTP. Thr-26 provides a ligand contact to Mg(2+). The segment at 60–64 (GITIN) is G2. Residues 81-84 (DCPG) form a G3 region. Residues 81–85 (DCPGH) and 136–139 (NKCD) contribute to the GTP site. The interval 136-139 (NKCD) is G4. A G5 region spans residues 174–176 (SAL).

It belongs to the TRAFAC class translation factor GTPase superfamily. Classic translation factor GTPase family. EF-Tu/EF-1A subfamily. As to quaternary structure, monomer.

Its subcellular location is the cytoplasm. It catalyses the reaction GTP + H2O = GDP + phosphate + H(+). Functionally, GTP hydrolase that promotes the GTP-dependent binding of aminoacyl-tRNA to the A-site of ribosomes during protein biosynthesis. The sequence is that of Elongation factor Tu from Vibrio cholerae serotype O1 (strain ATCC 39541 / Classical Ogawa 395 / O395).